The primary structure comprises 475 residues: MKINWKLLITVTLLAFSVWALWPSLKFALMSDEKKEQSEKERDPVLGRTLKLGLDLKGGTYLLLETDTSHLNGAVKVKDAVSRAIEIIRNRIDQFGVTEPMIAKQGDKWIVIQLPGIKDPKAAKDLIGKTALLEFRIVNTSEEARQVLDLIYEKRITPVQYRENSSAYPDIKAVMPEGASVFESRSNMDYYVLDKALLTGAALANAKVEFGGEYGQMMVSIEFNRDGGKIFEYITERNIGKSLAIVLDGIVQSAPVIRTRISRGERASIEGNFNSEDAKVLAAVLRAGALPVPVRLIEERTVGPSLGDDSIKKGFMSSLIGIVLVFLFMFIYYRSSGLIADVALSLNLIILMAIMAYLKFTLTLPGVAGIALTLAMSVDANVLILERIREEIAVGKTAKMAVDAGYQKVFWTIFDANFTTLIAALFLFQFGAGPIKGFAVTLSIGLIVSMFTAVTVTKLIYEFLFKKNLLLKIKI.

6 helical membrane passes run 7–27, 313–333, 338–358, 364–384, 410–430, and 437–457; these read LLITVTLLAFSVWALWPSLKF, KGFMSSLIGIVLVFLFMFIYY, LIADVALSLNLIILMAIMAYL, LPGVAGIALTLAMSVDANVLI, FWTIFDANFTTLIAALFLFQF, and GFAVTLSIGLIVSMFTAVTVT.

Belongs to the SecD/SecF family. SecD subfamily. As to quaternary structure, forms a complex with SecF. Part of the essential Sec protein translocation apparatus which comprises SecA, SecYEG and auxiliary proteins SecDF. Other proteins may also be involved.

Its subcellular location is the cell inner membrane. Part of the Sec protein translocase complex. Interacts with the SecYEG preprotein conducting channel. SecDF uses the proton motive force (PMF) to complete protein translocation after the ATP-dependent function of SecA. The protein is Protein translocase subunit SecD of Endomicrobium trichonymphae.